The primary structure comprises 303 residues: Coenzyme PQQ synthesis protein B (303 aa).

It belongs to the PqqB family.

It participates in cofactor biosynthesis; pyrroloquinoline quinone biosynthesis. In terms of biological role, may be involved in the transport of PQQ or its precursor to the periplasm. The polypeptide is Coenzyme PQQ synthesis protein B (Pseudomonas syringae pv. tomato (strain ATCC BAA-871 / DC3000)).